Here is a 489-residue protein sequence, read N- to C-terminus: Pluviatolide synthase (489 aa).

The helical transmembrane segment at 6–26 threads the bilayer; the sequence is SVLGLSSTLIIALAITVIFLL. Residue Cys-432 participates in heme binding.

This sequence belongs to the cytochrome P450 family. The cofactor is heme.

The protein resides in the membrane. The catalysed reaction is (-)-matairesinol + reduced [NADPH--hemoprotein reductase] + O2 = (-)-pluviatolide + oxidized [NADPH--hemoprotein reductase] + 2 H2O + H(+). It participates in aromatic compound metabolism; phenylpropanoid biosynthesis. In terms of biological role, cytochrome P450 involved in the biosynthesis of etoposide, a chemotherapeutic compound of the topoisomerase inhibitor family. Catalyzes the conversion of matairesinol to pluviatolide. The protein is Pluviatolide synthase of Podophyllum peltatum (American mandrake).